The following is a 248-amino-acid chain: Small ribosomal subunit protein uS2 (248 aa).

This sequence belongs to the universal ribosomal protein uS2 family.

The sequence is that of Small ribosomal subunit protein uS2 from Leptothrix cholodnii (strain ATCC 51168 / LMG 8142 / SP-6) (Leptothrix discophora (strain SP-6)).